The following is a 334-amino-acid chain: Holliday junction branch migration complex subunit RuvB (334 aa).

The segment at 1-182 (MDERLVSSEA…FGVLSRLEYY (182 aa)) is large ATPase domain (RuvB-L). Residues leucine 21, arginine 22, glycine 63, lysine 66, threonine 67, threonine 68, 129-131 (EDF), arginine 172, tyrosine 182, and arginine 219 each bind ATP. Residue threonine 67 participates in Mg(2+) binding. Residues 183-253 (TQEELTDIVS…IAHDALERLQ (71 aa)) are small ATPAse domain (RuvB-S). The tract at residues 256-334 (ALGLDHIDHK…HFRLEAPARD (79 aa)) is head domain (RuvB-H). 2 residues coordinate DNA: arginine 311 and arginine 316.

This sequence belongs to the RuvB family. As to quaternary structure, homohexamer. Forms an RuvA(8)-RuvB(12)-Holliday junction (HJ) complex. HJ DNA is sandwiched between 2 RuvA tetramers; dsDNA enters through RuvA and exits via RuvB. An RuvB hexamer assembles on each DNA strand where it exits the tetramer. Each RuvB hexamer is contacted by two RuvA subunits (via domain III) on 2 adjacent RuvB subunits; this complex drives branch migration. In the full resolvosome a probable DNA-RuvA(4)-RuvB(12)-RuvC(2) complex forms which resolves the HJ.

The protein resides in the cytoplasm. The catalysed reaction is ATP + H2O = ADP + phosphate + H(+). The RuvA-RuvB-RuvC complex processes Holliday junction (HJ) DNA during genetic recombination and DNA repair, while the RuvA-RuvB complex plays an important role in the rescue of blocked DNA replication forks via replication fork reversal (RFR). RuvA specifically binds to HJ cruciform DNA, conferring on it an open structure. The RuvB hexamer acts as an ATP-dependent pump, pulling dsDNA into and through the RuvAB complex. RuvB forms 2 homohexamers on either side of HJ DNA bound by 1 or 2 RuvA tetramers; 4 subunits per hexamer contact DNA at a time. Coordinated motions by a converter formed by DNA-disengaged RuvB subunits stimulates ATP hydrolysis and nucleotide exchange. Immobilization of the converter enables RuvB to convert the ATP-contained energy into a lever motion, pulling 2 nucleotides of DNA out of the RuvA tetramer per ATP hydrolyzed, thus driving DNA branch migration. The RuvB motors rotate together with the DNA substrate, which together with the progressing nucleotide cycle form the mechanistic basis for DNA recombination by continuous HJ branch migration. Branch migration allows RuvC to scan DNA until it finds its consensus sequence, where it cleaves and resolves cruciform DNA. The chain is Holliday junction branch migration complex subunit RuvB from Bacillus velezensis (strain DSM 23117 / BGSC 10A6 / LMG 26770 / FZB42) (Bacillus amyloliquefaciens subsp. plantarum).